The primary structure comprises 432 residues: uncharacterized protein (432 aa).

It to M.jannaschii MJ0977.

This is an uncharacterized protein from Methanocaldococcus jannaschii (strain ATCC 43067 / DSM 2661 / JAL-1 / JCM 10045 / NBRC 100440) (Methanococcus jannaschii).